The chain runs to 383 residues: Probable cell wall hydrolase LytN (383 aa).

Positions 1–49 are cleaved as a signal peptide; sequence MFVYYCKECFIMNKQQSKVRYSIRKVSIGILSISIGMFLALGMSNKAYA. Residues 175-219 form the LysM domain; sequence QIYTVKKGDTLSAIALKYKTTVSNIQNTNNIANPNLIFIGQKLKV. The Peptidase C51 domain occupies 241–378; sequence NSSTLNYLKT…NYENDMIFIR (138 aa).

Its subcellular location is the secreted. Its function is as follows. Probably involved in peptidoglycan hydrolysis. In Staphylococcus aureus (strain MSSA476), this protein is Probable cell wall hydrolase LytN (lytN).